The sequence spans 137 residues: Protein yippee-like F37A8.5 (137 aa).

The interval 1–20 (MHFRMKVLENSSKHNTPKKQ) is disordered. The region spanning 32 to 129 (RCYSCIHCRA…IELAHMVKDN (98 aa)) is the Yippee domain. Residues Cys-36, Cys-39, Cys-92, and Cys-95 each coordinate Zn(2+).

This sequence belongs to the yippee family.

The protein is Protein yippee-like F37A8.5 of Caenorhabditis elegans.